Reading from the N-terminus, the 468-residue chain is Secreted triacylglycerol lipase LIP2 (468 aa).

Residues 1–22 form the signal peptide; it reads MFGFRLFILAAVALAYIQCAAA. The cysteines at positions 125 and 295 are disulfide-linked. The active-site Nucleophile is Ser-209. Residues Asn-242, Asn-252, and Asn-279 are each glycosylated (N-linked (GlcNAc...) asparagine). Residues Asp-355 and His-389 contribute to the active site.

The protein belongs to the AB hydrolase superfamily. Lipase family. Class Lip subfamily.

The protein localises to the secreted. The enzyme catalyses a triacylglycerol + H2O = a diacylglycerol + a fatty acid + H(+). It carries out the reaction a monoacylglycerol + H2O = glycerol + a fatty acid + H(+). The catalysed reaction is a diacylglycerol + H2O = a monoacylglycerol + a fatty acid + H(+). In terms of biological role, secreted lipase that hydrolyzes acylglycerol lipids such as triacylglycerols and consequently releases free fatty acid. Due to an absence of fatty acid synthase genes in Malassezia species, secretory lipases are essential for the yeast to generate free fatty acids from degradation of sebum and assimilate them as lipid sources for growth. Plays important roles not only in lipid metabolism but also in the immune response of host cells and pathogenesis. The polypeptide is Secreted triacylglycerol lipase LIP2 (Malassezia furfur (Pityriasis versicolor infection agent)).